Here is a 382-residue protein sequence, read N- to C-terminus: p21-activated protein kinase-interacting protein 1 (382 aa).

WD repeat units follow at residues 37–77, 80–120, 122–160, 202–240, and 243–284; these read THHS…EHGA, HHAG…KTFK, HRGH…SAFI, TNGK…CLCE, and AHEN…KVPP. The interval 313–382 is disordered; the sequence is LPPAAEPCPD…MSEKKRKKKM (70 aa). The span at 352–363 shows a compositional bias: polar residues; sequence DSKQPTKGNSPV. The segment covering 365–382 has biased composition (basic residues); the sequence is AKKRKMATMSEKKRKKKM.

As to quaternary structure, interacts with PAK1.

Its subcellular location is the nucleus. The protein localises to the nucleolus. Its function is as follows. Negatively regulates the PAK1 kinase. PAK1 is a member of the PAK kinase family, which has been shown to play a positive role in the regulation of signaling pathways involving MAPK8 and RELA. PAK1 exists as an inactive homodimer, which is activated by binding of small GTPases such as CDC42 to an N-terminal regulatory domain. PAK1IP1 also binds to the N-terminus of PAK1, and inhibits the specific activation of PAK1 by CDC42. May be involved in ribosomal large subunit assembly. The sequence is that of p21-activated protein kinase-interacting protein 1 (Pak1ip1) from Mus musculus (Mouse).